Here is a 413-residue protein sequence, read N- to C-terminus: BSD domain-containing protein 1-A (413 aa).

One can recognise a BSD domain in the interval 146 to 198 (WLAYWDPEQRKAEISELLVTSPSIRALFTKMVPAAVSHSEFWQRYFYKVHQLE). Composition is skewed to basic and acidic residues over residues 208–219 (KQRADQSVHSEE) and 255–271 (HVEDKSEKTAELNRDHT). 2 disordered regions span residues 208-228 (KQRADQSVHSEEPTWEEEEED) and 255-386 (HVED…EFDM). The segment covering 274–287 (TSPSESSESISPIT) has biased composition (low complexity). Polar residues predominate over residues 297–322 (QTPSKEPSPGTLTVTKENTGAGTDET). Positions 342–352 (QREDPPSDLRV) are enriched in basic and acidic residues. The segment covering 356–375 (NSDSGKSTPSNNGQKGSSTD) has biased composition (polar residues). The span at 376-386 (ISEDWEKEFDM) shows a compositional bias: acidic residues.

The sequence is that of BSD domain-containing protein 1-A (bsdc1-a) from Xenopus laevis (African clawed frog).